The following is a 79-amino-acid chain: Small ribosomal subunit protein bS18 (79 aa).

Belongs to the bacterial ribosomal protein bS18 family. In terms of assembly, part of the 30S ribosomal subunit. Forms a tight heterodimer with protein bS6.

Binds as a heterodimer with protein bS6 to the central domain of the 16S rRNA, where it helps stabilize the platform of the 30S subunit. This Bradyrhizobium sp. (strain BTAi1 / ATCC BAA-1182) protein is Small ribosomal subunit protein bS18.